The sequence spans 157 residues: Ribosome maturation factor RimP (157 aa).

Belongs to the RimP family.

The protein resides in the cytoplasm. Functionally, required for maturation of 30S ribosomal subunits. This is Ribosome maturation factor RimP from Thermosynechococcus vestitus (strain NIES-2133 / IAM M-273 / BP-1).